The chain runs to 207 residues: A-type ATP synthase subunit E (207 aa).

Belongs to the V-ATPase E subunit family. Has multiple subunits with at least A(3), B(3), C, D, E, F, H, I and proteolipid K(x).

The protein localises to the cell membrane. Component of the A-type ATP synthase that produces ATP from ADP in the presence of a proton gradient across the membrane. This Hyperthermus butylicus (strain DSM 5456 / JCM 9403 / PLM1-5) protein is A-type ATP synthase subunit E.